Reading from the N-terminus, the 510-residue chain is NAD(P)H-quinone oxidoreductase subunit 2 B, chloroplastic (510 aa).

13 helical membrane-spanning segments follow: residues 24–44 (LLLF…GLIL), 57–77 (IPWL…ALLF), 99–119 (IFQF…VEYI), 124–144 (MAIT…MFLC), 149–169 (LITI…LSGY), 183–203 (YLLM…WLYG), 227–247 (PGIS…LSPA), 295–315 (WHLH…LIAI), 323–343 (MLAY…IVGD), 347–367 (GYAS…GTFA), 395–415 (ALSL…AGFF), 418–438 (LHLF…IGLL), and 484–504 (MIVC…IIAI).

It belongs to the complex I subunit 2 family. In terms of assembly, NDH is composed of at least 16 different subunits, 5 of which are encoded in the nucleus.

The protein resides in the plastid. The protein localises to the chloroplast thylakoid membrane. It carries out the reaction a plastoquinone + NADH + (n+1) H(+)(in) = a plastoquinol + NAD(+) + n H(+)(out). The catalysed reaction is a plastoquinone + NADPH + (n+1) H(+)(in) = a plastoquinol + NADP(+) + n H(+)(out). Functionally, NDH shuttles electrons from NAD(P)H:plastoquinone, via FMN and iron-sulfur (Fe-S) centers, to quinones in the photosynthetic chain and possibly in a chloroplast respiratory chain. The immediate electron acceptor for the enzyme in this species is believed to be plastoquinone. Couples the redox reaction to proton translocation, and thus conserves the redox energy in a proton gradient. This Buxus microphylla (Littleleaf boxwood) protein is NAD(P)H-quinone oxidoreductase subunit 2 B, chloroplastic.